We begin with the raw amino-acid sequence, 54 residues long: Ovomucoid (54 aa).

Residues 4–54 (VDCSEYPKPACTLEHRPLCGSDNKTYGNKCNFCNAVVESNGTLTLSHFGKC) form the Kazal-like domain. 3 disulfide bridges follow: Cys-6–Cys-36, Cys-14–Cys-33, and Cys-22–Cys-54. Asn-43 carries an N-linked (GlcNAc...) asparagine glycan.

It localises to the secreted. The protein is Ovomucoid of Pavo muticus (Green peafowl).